We begin with the raw amino-acid sequence, 785 residues long: Formin-like protein 3 (785 aa).

Positions 1–20 are cleaved as a signal peptide; the sequence is MGRLRLAFLAISLVVFVCVS. The tract at residues 96–145 is disordered; sequence YDWLAPASSPNEPPAETPDESSPSPSEETPSVVAPSQSVPGPPRPPPQRE. Positions 115–134 are enriched in low complexity; that stretch reads ESSPSPSEETPSVVAPSQSV. The helical transmembrane segment at 154–174 threads the bilayer; the sequence is LIIAVASTAVLTFVFVALMFL. Disordered stretches follow at residues 184 to 228, 241 to 329, and 730 to 785; these read AVGS…KKRS, EFST…APKT, and ETTK…SSPS. Residues 201 to 223 are compositionally biased toward polar residues; sequence STGSTENSPTVASTSRKMFSVAS. A compositionally biased stretch (pro residues) spans 256–303; that stretch reads LKLPPGRSAPPPPPAAAPPPQPPPPPPPKPQPPPPPKIARPPPAPPKG. An FH2 domain is found at 321–747; sequence DSETGAPKTK…SGKKESEMTT (427 aa). Over residues 745 to 754 the composition is skewed to polar residues; it reads MTTSDSNQPS. Over residues 773–785 the composition is skewed to acidic residues; sequence SDDSDDEEDSSPS.

This sequence belongs to the formin-like family. Class-I subfamily.

The protein localises to the membrane. Acts as actin nucleation factor that directs the formation of actin cables and polarized growth in pollen tubes. The polypeptide is Formin-like protein 3 (FH3) (Arabidopsis thaliana (Mouse-ear cress)).